We begin with the raw amino-acid sequence, 393 residues long: STE20-related kinase adapter protein alpha (393 aa).

Residues Ser2 and Ser9 each carry the phosphoserine modification. Positions 32–341 (YELLSVIGKG…ASTLLNHSFF (310 aa)) constitute a Protein kinase domain. At Thr381 the chain carries Phosphothreonine; by LKB1.

It belongs to the protein kinase superfamily. STE Ser/Thr protein kinase family. STE20 subfamily. In terms of assembly, component of a trimeric complex composed of STK11/LKB1, STRAD (STRADA or STRADB) and CAB39/MO25 (CAB39/MO25alpha or CAB39L/MO25beta): the complex tethers STK11/LKB1 in the cytoplasm and stimulates its catalytic activity. As to expression, expressed in liver.

It localises to the nucleus. The protein resides in the cytoplasm. Its function is as follows. Pseudokinase which, in complex with CAB39/MO25 (CAB39/MO25alpha or CAB39L/MO25beta), binds to and activates STK11/LKB1. Adopts a closed conformation typical of active protein kinases and binds STK11/LKB1 as a pseudosubstrate, promoting conformational change of STK11/LKB1 in an active conformation. This Rattus norvegicus (Rat) protein is STE20-related kinase adapter protein alpha (Strada).